The following is a 196-amino-acid chain: Peptidyl-tRNA hydrolase (196 aa).

Residue tyrosine 17 coordinates tRNA. Histidine 22 (proton acceptor) is an active-site residue. Residues phenylalanine 68, asparagine 70, and asparagine 116 each contribute to the tRNA site.

Belongs to the PTH family. In terms of assembly, monomer.

The protein localises to the cytoplasm. It catalyses the reaction an N-acyl-L-alpha-aminoacyl-tRNA + H2O = an N-acyl-L-amino acid + a tRNA + H(+). In terms of biological role, hydrolyzes ribosome-free peptidyl-tRNAs (with 1 or more amino acids incorporated), which drop off the ribosome during protein synthesis, or as a result of ribosome stalling. Catalyzes the release of premature peptidyl moieties from peptidyl-tRNA molecules trapped in stalled 50S ribosomal subunits, and thus maintains levels of free tRNAs and 50S ribosomes. This is Peptidyl-tRNA hydrolase from Serratia proteamaculans (strain 568).